The chain runs to 399 residues: Protein LIGULELESS 1 (399 aa).

The disordered stretch occupies residues Met-1–Pro-28. The span at Pro-15–Ala-24 shows a compositional bias: low complexity. The SBP-type zinc finger occupies Pro-182–Ser-260. Zn(2+)-binding residues include Cys-185, Cys-190, Cys-207, His-210, Cys-227, Cys-230, His-234, and Cys-246. The short motif at Lys-243–Lys-259 is the Bipartite nuclear localization signal element. Residues Leu-250 to Met-292 form a disordered region. The segment covering Lys-261–Lys-270 has biased composition (basic and acidic residues).

As to expression, leaf ligular region, blade and sheath.

It localises to the nucleus. In terms of biological role, involved in the formation of ligules and auricles during leaf organogenesis. This Zea mays (Maize) protein is Protein LIGULELESS 1 (LG1).